A 178-amino-acid chain; its full sequence is Large ribosomal subunit protein eL20 (178 aa).

This sequence belongs to the eukaryotic ribosomal protein eL20 family.

The chain is Large ribosomal subunit protein eL20 (RPL18A) from Oryza sativa subsp. japonica (Rice).